Consider the following 179-residue polypeptide: Large ribosomal subunit protein uL6 (179 aa).

It belongs to the universal ribosomal protein uL6 family. As to quaternary structure, part of the 50S ribosomal subunit.

Its function is as follows. This protein binds to the 23S rRNA, and is important in its secondary structure. It is located near the subunit interface in the base of the L7/L12 stalk, and near the tRNA binding site of the peptidyltransferase center. This is Large ribosomal subunit protein uL6 from Syntrophotalea carbinolica (strain DSM 2380 / NBRC 103641 / GraBd1) (Pelobacter carbinolicus).